We begin with the raw amino-acid sequence, 711 residues long: DNA ligase (711 aa).

Residues 39–43 (DAEYD), 88–89 (SL), and Glu119 each bind NAD(+). Lys121 functions as the N6-AMP-lysine intermediate in the catalytic mechanism. Residues Arg142, Glu179, Lys295, and Lys319 each contribute to the NAD(+) site. Residues Cys416, Cys419, Cys434, and Cys440 each coordinate Zn(2+). In terms of domain architecture, BRCT spans 630–711 (ESVSSLAGRA…LRELLAGAGA (82 aa)).

This sequence belongs to the NAD-dependent DNA ligase family. LigA subfamily. It depends on Mg(2+) as a cofactor. Mn(2+) is required as a cofactor.

The enzyme catalyses NAD(+) + (deoxyribonucleotide)n-3'-hydroxyl + 5'-phospho-(deoxyribonucleotide)m = (deoxyribonucleotide)n+m + AMP + beta-nicotinamide D-nucleotide.. Its function is as follows. DNA ligase that catalyzes the formation of phosphodiester linkages between 5'-phosphoryl and 3'-hydroxyl groups in double-stranded DNA using NAD as a coenzyme and as the energy source for the reaction. It is essential for DNA replication and repair of damaged DNA. In Halorhodospira halophila (strain DSM 244 / SL1) (Ectothiorhodospira halophila (strain DSM 244 / SL1)), this protein is DNA ligase.